The following is a 74-amino-acid chain: Bacteriocin hiracin-JM79 (74 aa).

Positions 1–30 (MKKKVLKHCVILGILGTCLAGIGTGIKVDA) are cleaved as a signal peptide.

Its subcellular location is the secreted. Its function is as follows. Bacteriocin with antibacterial activity against the Gram-positive Listeria, Enterococcus, Propionibacterium, Staphylococcus and some strains of Clostridium, Lactobacillus and Pediococcus. Lacks antibacterial activity against Gram-negative bacteria. This chain is Bacteriocin hiracin-JM79, found in Enterococcus hirae.